The sequence spans 902 residues: Cytosolic carboxypeptidase 2 (902 aa).

Residues 396–666 (YPYTYTDLQC…HVCDTLLDFC (271 aa)) enclose the Peptidase M14 domain. Zn(2+) contacts are provided by histidine 462, glutamate 465, and histidine 558. The active-site Proton donor/acceptor is the glutamate 630. Over residues 746 to 758 (FKKKKKKSLQTRK) the composition is skewed to basic residues. Disordered regions lie at residues 746–770 (FKKK…KNLM) and 796–879 (FKNS…PRSR). Residues 853–866 (VSCSPKRTINSSQE) are compositionally biased toward polar residues.

The protein belongs to the peptidase M14 family. As to quaternary structure, interacts with RARRES1, KIF11 AND MAPRE1. Zn(2+) is required as a cofactor.

Its subcellular location is the cytoplasm. The protein resides in the cytosol. The protein localises to the cytoskeleton. It is found in the microtubule organizing center. It localises to the centrosome. Its subcellular location is the centriole. The protein resides in the cilium basal body. It carries out the reaction (L-glutamyl)(n+1)-gamma-L-glutamyl-L-glutamyl-[protein] + H2O = (L-glutamyl)(n)-gamma-L-glutamyl-L-glutamyl-[protein] + L-glutamate. Inhibited by RARRES1. Functionally, metallocarboxypeptidase that mediates deglutamylation of tubulin and non-tubulin target proteins. Catalyzes the removal of polyglutamate side chains present on the gamma-carboxyl group of glutamate residues within the C-terminal tail of tubulin protein. Specifically cleaves tubulin long-side-chains, while it is not able to remove the branching point glutamate. Also catalyzes the removal of polyglutamate residues from the carboxy-terminus of non-tubulin proteins such as MYLK. The protein is Cytosolic carboxypeptidase 2 of Homo sapiens (Human).